Here is a 475-residue protein sequence, read N- to C-terminus: Probable proline--tRNA ligase, mitochondrial (475 aa).

A mitochondrion-targeting transit peptide spans 1 to 29 (MEGLLTRCRTLSALATCSLRHSRCIVRKC).

Belongs to the class-II aminoacyl-tRNA synthetase family.

The protein resides in the mitochondrion matrix. The catalysed reaction is tRNA(Pro) + L-proline + ATP = L-prolyl-tRNA(Pro) + AMP + diphosphate. In terms of biological role, mitochondrial aminoacyl-tRNA synthetase that catalyzes the specific attachment of the proline amino acid (aa) to the homologous transfer RNA (tRNA), further participating in protein synthesis. The reaction occurs in a two steps: proline is first activated by ATP to form Pro-AMP and then transferred to the acceptor end of tRNA(Pro). The protein is Probable proline--tRNA ligase, mitochondrial (Pars2) of Rattus norvegicus (Rat).